A 261-amino-acid chain; its full sequence is Taurine import ATP-binding protein TauB (261 aa).

The 230-residue stretch at 4–233 (LTADRVSVRY…RWRAGDSARA (230 aa)) folds into the ABC transporter domain. 38-45 (GPSGCGKT) is an ATP binding site.

This sequence belongs to the ABC transporter superfamily. Taurine importer (TC 3.A.1.17.1) family. The complex is composed of two ATP-binding proteins (TauB), two transmembrane proteins (TauC) and a solute-binding protein (TauA).

Its subcellular location is the cell inner membrane. It catalyses the reaction taurine(out) + ATP + H2O = taurine(in) + ADP + phosphate + H(+). In terms of biological role, part of the ABC transporter complex TauABC involved in taurine import. Responsible for energy coupling to the transport system. This Chromobacterium violaceum (strain ATCC 12472 / DSM 30191 / JCM 1249 / CCUG 213 / NBRC 12614 / NCIMB 9131 / NCTC 9757 / MK) protein is Taurine import ATP-binding protein TauB.